The sequence spans 268 residues: Energy-coupling factor transporter transmembrane protein EcfT (268 aa).

Helical transmembrane passes span 28–48, 63–83, 107–127, 152–172, and 248–268; these read FVFLFIILIFFCHSPLTYLWV, LWFLIKGLTPIFFFLIFTLMM, ILEGLYISLRLIGIVMIATIM, LPVHQLSMIMSIALRFIPTLM, and ISLTMIIPIAIILFVLKYSGV.

Belongs to the energy-coupling factor EcfT family. As to quaternary structure, forms a stable energy-coupling factor (ECF) transporter complex composed of 2 membrane-embedded substrate-binding proteins (S component), 2 ATP-binding proteins (A component) and 2 transmembrane proteins (T component). May be able to interact with more than 1 S component at a time.

The protein localises to the cell membrane. In terms of biological role, transmembrane (T) component of an energy-coupling factor (ECF) ABC-transporter complex. Unlike classic ABC transporters this ECF transporter provides the energy necessary to transport a number of different substrates. The polypeptide is Energy-coupling factor transporter transmembrane protein EcfT (Staphylococcus aureus (strain 04-02981)).